A 229-amino-acid chain; its full sequence is Ribonuclease 3 (229 aa).

An RNase III domain is found at Trp-4–Gly-133. Position 46 (Glu-46) interacts with Mg(2+). Asp-50 is a catalytic residue. Mg(2+) contacts are provided by Asp-119 and Glu-122. The active site involves Glu-122. The 70-residue stretch at Asp-159–His-228 folds into the DRBM domain.

This sequence belongs to the ribonuclease III family. As to quaternary structure, homodimer. It depends on Mg(2+) as a cofactor.

Its subcellular location is the cytoplasm. The catalysed reaction is Endonucleolytic cleavage to 5'-phosphomonoester.. Digests double-stranded RNA. Involved in the processing of primary rRNA transcript to yield the immediate precursors to the large and small rRNAs (23S and 16S). Processes some mRNAs, and tRNAs when they are encoded in the rRNA operon. Processes pre-crRNA and tracrRNA of type II CRISPR loci if present in the organism. The protein is Ribonuclease 3 of Listeria monocytogenes serotype 4a (strain HCC23).